The following is a 274-amino-acid chain: Ribose-5-phosphate isomerase (274 aa).

This sequence belongs to the ribose 5-phosphate isomerase family.

Its subcellular location is the cytoplasm. It carries out the reaction aldehydo-D-ribose 5-phosphate = D-ribulose 5-phosphate. Its pathway is carbohydrate degradation; pentose phosphate pathway; D-ribose 5-phosphate from D-ribulose 5-phosphate (non-oxidative stage): step 1/1. The chain is Ribose-5-phosphate isomerase (rki1) from Schizosaccharomyces pombe (strain 972 / ATCC 24843) (Fission yeast).